The chain runs to 251 residues: uncharacterized protein (251 aa).

This is an uncharacterized protein from Bacillus subtilis (strain 168).